The sequence spans 524 residues: Zinc finger protein GLIS2 (524 aa).

Residues 35–174 (ALHRELGLVD…PKQLVCRWAK (140 aa)) are interaction with CTNND1. Disordered stretches follow at residues 39–62 (ELGL…FLLN) and 84–114 (SPPS…VPSA). The tract at residues 71–137 (GRFSAAPLVD…SSFQFFLPLG (67 aa)) is transcription activation. Over residues 84 to 100 (SPPSGLDSPNGSSSLSP) the composition is skewed to low complexity. A transcription repression region spans residues 148 to 171 (SFLTPPKDKCLSPDLPLPKQLVCR). Residues 168–193 (LVCRWAKCNQLFELLQDLVDHVNDYH) form a C2H2-type 1 zinc finger. The C2H2-type 2; atypical zinc-finger motif lies at 202 to 229 (YCCHWEGCARHGRGFNARYKMLIHIRTH). 3 consecutive C2H2-type zinc fingers follow at residues 235–257 (HRCP…NRSH), 263–287 (YVCP…TRTH), and 293–317 (YYCK…IKAH). A disordered region spans residues 439–480 (GGKAEGEKGRGSVPTRALGMEGHKTPLERTESSCSRPSPDGL). Residues 459–469 (EGHKTPLERTE) show a composition bias toward basic and acidic residues.

This sequence belongs to the GLI C2H2-type zinc-finger protein family. Interacts with CTBP1 and HDAC3. Interacts with CTNNB1. Interacts with SUFU. Interacts with CTNND1. Post-translationally, C-terminus cleavage is induced by interaction with CTNND1 and enhanced by Src tyrosine kinase. In terms of tissue distribution, expressed at high levels in kidney and at low levels in heart, lung and placenta. Expressed in colon.

It localises to the nucleus speckle. The protein resides in the cytoplasm. In terms of biological role, can act either as a transcriptional repressor or as a transcriptional activator, depending on the cell context. Acts as a repressor of the Hedgehog signaling pathway. Represses the Hedgehog-dependent expression of Wnt4. Necessary to maintain the differentiated epithelial phenotype in renal cells through the inhibition of SNAI1, which itself induces the epithelial-to-mesenchymal transition. Represses transcriptional activation mediated by CTNNB1 in the Wnt signaling pathway. May act by recruiting the corepressors CTBP1 and HDAC3. May be involved in neuron differentiation. This chain is Zinc finger protein GLIS2 (GLIS2), found in Homo sapiens (Human).